We begin with the raw amino-acid sequence, 529 residues long: Arginine--tRNA ligase (529 aa).

A 'HIGH' region motif is present at residues 113 to 123 (ANPTGPLHIGH).

The protein belongs to the class-I aminoacyl-tRNA synthetase family. Monomer.

It localises to the cytoplasm. It catalyses the reaction tRNA(Arg) + L-arginine + ATP = L-arginyl-tRNA(Arg) + AMP + diphosphate. This is Arginine--tRNA ligase from Aliarcobacter butzleri (strain RM4018) (Arcobacter butzleri).